Reading from the N-terminus, the 376-residue chain is Ribosomal RNA large subunit methyltransferase G (376 aa).

It belongs to the methyltransferase superfamily. RlmG family.

It localises to the cytoplasm. It catalyses the reaction guanosine(1835) in 23S rRNA + S-adenosyl-L-methionine = N(2)-methylguanosine(1835) in 23S rRNA + S-adenosyl-L-homocysteine + H(+). Functionally, specifically methylates the guanine in position 1835 (m2G1835) of 23S rRNA. This is Ribosomal RNA large subunit methyltransferase G from Vibrio vulnificus (strain CMCP6).